We begin with the raw amino-acid sequence, 359 residues long: Type-1 angiotensin II receptor (359 aa).

The Extracellular portion of the chain corresponds to 1–25; sequence MILNSSTEDGIKRIQDDCPKAGRHN. Asparagine 4 carries an N-linked (GlcNAc...) asparagine glycan. Residues glutamine 15 and aspartate 17 each contribute to the angiotensin II site. Intrachain disulfides connect cysteine 18–cysteine 274 and cysteine 101–cysteine 180. A helical membrane pass occupies residues 26-55; sequence YIFIMIPTLYSIIFVVGIFGNSLVVIVIYF. Topologically, residues 56–61 are cytoplasmic; it reads YMKLKT. The helical transmembrane segment at 62–89 threads the bilayer; that stretch reads VASVFLLNLALADLCFLLTLPLWAVYTA. Over 90–98 the chain is Extracellular; the sequence is MEYRWPFGN. Residues 99-125 form a helical membrane-spanning segment; sequence YLCKIASASVSFNLYASVFLLTCLSID. Topologically, residues 126-141 are cytoplasmic; the sequence is RYLAIVHPMKSRLRRT. Residues 142-165 form a helical membrane-spanning segment; that stretch reads MLVAKVTCIIIWLLAGLASLPTII. Over 166 to 190 the chain is Extracellular; sequence HRNVFFIENTNITVCAFHYESQNST. An angiotensin II-binding site is contributed by arginine 167. The N-linked (GlcNAc...) asparagine glycan is linked to asparagine 176. Residues phenylalanine 182, histidine 183, and tyrosine 184 each coordinate angiotensin II. N-linked (GlcNAc...) asparagine glycosylation is present at asparagine 188. The helical transmembrane segment at 191–216 threads the bilayer; that stretch reads LPVGLGLTKNILGFLFPFLIILTSYT. An angiotensin II-binding site is contributed by lysine 199. Over 217-239 the chain is Cytoplasmic; sequence LIWKTLKKAYEIQKNKPRKDDIF. Residues 240 to 268 form a helical membrane-spanning segment; sequence KIILAIVLFFFFSWVPHQIFTFMDVLIQL. At 269–278 the chain is on the extracellular side; it reads GLIRDCKIED. Residues 279-304 traverse the membrane as a helical segment; it reads IVDTAMPITICLAYFNNCLNPLFYGF. At 305–359 the chain is on the cytoplasmic side; the sequence is LGKKFKKYFLQLLKYIPPKAKSHSNLSTKMSTLSYRPSENGNSSTKKPAPCIEVE. The segment covering 336-350 has biased composition (polar residues); the sequence is TLSYRPSENGNSSTK. The disordered stretch occupies residues 336 to 359; sequence TLSYRPSENGNSSTKKPAPCIEVE. The S-palmitoyl cysteine moiety is linked to residue cysteine 355.

This sequence belongs to the G-protein coupled receptor 1 family. In terms of assembly, interacts with MAS1. Interacts with ARRB1. Interacts with FLNA (via filamin repeat 21); increases PKA-mediated phosphorylation of FLNA. C-terminal Ser or Thr residues may be phosphorylated. Adrenal medulla, cortex and kidney.

The protein resides in the cell membrane. Its function is as follows. Receptor for angiotensin II, a vasoconstricting peptide, which acts as a key regulator of blood pressure and sodium retention by the kidney. The activated receptor in turn couples to G-alpha proteins G(q) (GNAQ, GNA11, GNA14 or GNA15) and thus activates phospholipase C and increases the cytosolic Ca(2+) concentrations, which in turn triggers cellular responses such as stimulation of protein kinase C. The polypeptide is Type-1 angiotensin II receptor (AGTR1) (Bos taurus (Bovine)).